We begin with the raw amino-acid sequence, 643 residues long: RNA-binding protein RO60 (643 aa).

One can recognise a TROVE domain in the interval 63–473; it reads VENNAGGFVF…AFVNAPPTGK (411 aa). The interval 186 to 390 is RNA-binding; that stretch reads RTPTHLFEFV…SMPMTAMIRN (205 aa). The interval 465-643 is VWFA-like domain; it reads FVNAPPTGKR…IVHEFVTGKI (179 aa). The a divalent metal cation site is built by S482, S484, and T549.

The protein belongs to the Ro 60 kDa family.

It localises to the cytoplasm. Its function is as follows. RNA-binding protein that binds to misfolded non-coding RNAs, pre-5S rRNA, and several small cytoplasmic RNA molecules known as Y RNAs. In Caenorhabditis elegans, this protein is RNA-binding protein RO60.